The chain runs to 103 residues: Pyrimidine/purine nucleoside phosphorylase (103 aa).

Belongs to the nucleoside phosphorylase PpnP family.

The enzyme catalyses a purine D-ribonucleoside + phosphate = a purine nucleobase + alpha-D-ribose 1-phosphate. It carries out the reaction adenosine + phosphate = alpha-D-ribose 1-phosphate + adenine. The catalysed reaction is cytidine + phosphate = cytosine + alpha-D-ribose 1-phosphate. It catalyses the reaction guanosine + phosphate = alpha-D-ribose 1-phosphate + guanine. The enzyme catalyses inosine + phosphate = alpha-D-ribose 1-phosphate + hypoxanthine. It carries out the reaction thymidine + phosphate = 2-deoxy-alpha-D-ribose 1-phosphate + thymine. The catalysed reaction is uridine + phosphate = alpha-D-ribose 1-phosphate + uracil. It catalyses the reaction xanthosine + phosphate = alpha-D-ribose 1-phosphate + xanthine. In terms of biological role, catalyzes the phosphorolysis of diverse nucleosides, yielding D-ribose 1-phosphate and the respective free bases. Can use uridine, adenosine, guanosine, cytidine, thymidine, inosine and xanthosine as substrates. Also catalyzes the reverse reactions. In Shewanella sp. (strain W3-18-1), this protein is Pyrimidine/purine nucleoside phosphorylase.